We begin with the raw amino-acid sequence, 339 residues long: MKNNKSVIIWLLSGCFLVFIMVVVGGITRLTNSGLSMTDWHLVTDTFPPLTEAKWEETFEKYKLFPEYQKINIHNDFTLSDYKFIYFWEWFHRFIGRIIGLVFIIPFIYFLIKKKLNTETLRKCAILLGMGAFQGFLGWFMVKSGLIDAPDVSHFRLSLHLTFAFITFAYTLWVALDLIYPEKKQVILPLRNIARITLAIIILQIIYGGFVAGLNAGLIHNHWPLMSDGQFFHESIILEKESWFARFTEGKSGVQFVHRTIAYFVAGLIVFLTFKSKKHTLSLEQKNGLNALLIIVFIQFTLGVLTLLYSVPLWLGVIHQAMAFILLATTTYTLHRFSK.

The next 8 helical transmembrane spans lie at 7–27, 92–112, 126–146, 159–179, 199–219, 254–274, 291–311, and 312–332; these read VIIWLLSGCFLVFIMVVVGGI, HRFIGRIIGLVFIIPFIYFLI, ILLGMGAFQGFLGWFMVKSGL, LHLTFAFITFAYTLWVALDLI, AIIILQIIYGGFVAGLNAGLI, VQFVHRTIAYFVAGLIVFLTF, ALLIIVFIQFTLGVLTLLYSV, and PLWLGVIHQAMAFILLATTTY. H258 contributes to the heme binding site. H319 contributes to the heme binding site.

Belongs to the COX15/CtaA family. Type 2 subfamily. Interacts with CtaB. Heme b is required as a cofactor.

The protein resides in the cell membrane. It catalyses the reaction Fe(II)-heme o + 2 A + H2O = Fe(II)-heme a + 2 AH2. Its pathway is porphyrin-containing compound metabolism; heme A biosynthesis; heme A from heme O: step 1/1. Catalyzes the conversion of heme O to heme A by two successive hydroxylations of the methyl group at C8. The first hydroxylation forms heme I, the second hydroxylation results in an unstable dihydroxymethyl group, which spontaneously dehydrates, resulting in the formyl group of heme A. This Flavobacterium psychrophilum (strain ATCC 49511 / DSM 21280 / CIP 103535 / JIP02/86) protein is Heme A synthase.